The following is an 80-amino-acid chain: Acyl carrier protein (80 aa).

Residues 4–79 (DEVKGQVYDI…DAINYIVEKK (76 aa)) enclose the Carrier domain. Ser-39 bears the O-(pantetheine 4'-phosphoryl)serine mark.

Belongs to the acyl carrier protein (ACP) family. Post-translationally, 4'-phosphopantetheine is transferred from CoA to a specific serine of apo-ACP by AcpS. This modification is essential for activity because fatty acids are bound in thioester linkage to the sulfhydryl of the prosthetic group.

It localises to the cytoplasm. It functions in the pathway lipid metabolism; fatty acid biosynthesis. In terms of biological role, carrier of the growing fatty acid chain in fatty acid biosynthesis. This Chloroherpeton thalassium (strain ATCC 35110 / GB-78) protein is Acyl carrier protein.